The chain runs to 554 residues: 5'-AMP-activated protein kinase catalytic subunit alpha-1 (554 aa).

In terms of domain architecture, Protein kinase spans 22-274 (YILGDTLGVG…IKDIREHEWF (253 aa)). The residue at position 27 (Thr27) is a Phosphothreonine. ATP contacts are provided by residues 28–36 (LGVGTFGKV) and Lys51. Asp145 functions as the Proton acceptor in the catalytic mechanism. The residue at position 178 (Thr178) is a Phosphothreonine; by LKB1 and CaMKK2. Phosphothreonine is present on residues Thr264 and Thr350. The segment at 297-376 (EALKEVCEKF…PERVPFLVAE (80 aa)) is AIS. The residue at position 351 (Ser351) is a Phosphoserine. Phosphoserine; by ULK1 is present on Ser355. A Phosphothreonine; by ULK1 modification is found at Thr363. Thr377 carries the phosphothreonine modification. Position 392 is a phosphoserine; by ULK1 (Ser392). Ser462 bears the Phosphoserine mark. Polar residues predominate over residues 480–500 (KSGTATPQRSGSVSNYRSCQR). Residues 480–531 (KSGTATPQRSGSVSNYRSCQRSDSDAEAQGKSSEVSLTSSVTSLDSSPVDLT) form a disordered region. Ser481 carries the post-translational modification Phosphoserine; by ULK1. Thr483 is modified (phosphothreonine; by ULK1). At Thr485 the chain carries Phosphothreonine. Residues Ser491, Ser503, Ser519, and Ser522 each carry the phosphoserine modification. The span at 511–530 (SSEVSLTSSVTSLDSSPVDL) shows a compositional bias: low complexity.

The protein belongs to the protein kinase superfamily. CAMK Ser/Thr protein kinase family. SNF1 subfamily. As to quaternary structure, AMPK is a heterotrimer of an alpha catalytic subunit (PRKAA1 or PRKAA2), a beta (PRKAB1 or PRKAB2) and a gamma non-catalytic subunits (PRKAG1, PRKAG2 or PRKAG3). Interacts with FNIP1 and FNIP2. It depends on Mg(2+) as a cofactor. Ubiquitinated. Post-translationally, phosphorylated at Thr-183 by STK11/LKB1 in complex with STE20-related adapter-alpha (STRADA) pseudo kinase and CAB39. Also phosphorylated at Thr-183 by CAMKK2; triggered by a rise in intracellular calcium ions, without detectable changes in the AMP/ATP ratio. CAMKK1 can also phosphorylate Thr-183, but at a much lower level. Dephosphorylated by protein phosphatase 2A and 2C (PP2A and PP2C). Phosphorylated by ULK1 and ULK2; leading to negatively regulate AMPK activity and suggesting the existence of a regulatory feedback loop between ULK1, ULK2 and AMPK. Dephosphorylated by PPM1A and PPM1B. In terms of processing, glycosylated; O-GlcNAcylated by OGT, promoting the AMP-activated protein kinase (AMPK) activity.

It localises to the cytoplasm. It is found in the nucleus. It carries out the reaction L-seryl-[protein] + ATP = O-phospho-L-seryl-[protein] + ADP + H(+). The enzyme catalyses L-threonyl-[protein] + ATP = O-phospho-L-threonyl-[protein] + ADP + H(+). It catalyses the reaction L-seryl-[acetyl-CoA carboxylase] + ATP = O-phospho-L-seryl-[acetyl-CoA carboxylase] + ADP + H(+). The catalysed reaction is L-seryl-[3-hydroxy-3-methylglutaryl-coenzyme A reductase] + ATP = O-phospho-L-seryl-[3-hydroxy-3-methylglutaryl-coenzyme A reductase] + ADP + H(+). It carries out the reaction L-seryl-[tau protein] + ATP = O-phospho-L-seryl-[tau protein] + ADP + H(+). The enzyme catalyses L-threonyl-[tau protein] + ATP = O-phospho-L-threonyl-[tau protein] + ADP + H(+). With respect to regulation, activated by phosphorylation on Thr-183. Binding of AMP to non-catalytic gamma subunit (PRKAG1, PRKAG2 or PRKAG3) results in allosteric activation, inducing phosphorylation on Thr-183. AMP-binding to gamma subunit also sustains activity by preventing dephosphorylation of Thr-183. ADP also stimulates Thr-183 phosphorylation, without stimulating already phosphorylated AMPK. ATP promotes dephosphorylation of Thr-183, rendering the enzyme inactive. Under physiological conditions AMPK mainly exists in its inactive form in complex with ATP, which is much more abundant than AMP. Selectively inhibited by compound C (6-[4-(2-Piperidin-1-yl-ethoxy)-phenyl)]-3-pyridin-4-yl-pyyrazolo[1,5-a] pyrimidine. Activated by resveratrol, a natural polyphenol present in red wine, and S17834, a synthetic polyphenol. Functionally, catalytic subunit of AMP-activated protein kinase (AMPK), an energy sensor protein kinase that plays a key role in regulating cellular energy metabolism. In response to reduction of intracellular ATP levels, AMPK activates energy-producing pathways and inhibits energy-consuming processes: inhibits protein, carbohydrate and lipid biosynthesis, as well as cell growth and proliferation. AMPK acts via direct phosphorylation of metabolic enzymes, and by longer-term effects via phosphorylation of transcription regulators. Regulates lipid synthesis by phosphorylating and inactivating lipid metabolic enzymes such as ACACA, ACACB, GYS1, HMGCR and LIPE; regulates fatty acid and cholesterol synthesis by phosphorylating acetyl-CoA carboxylase (ACACA and ACACB) and hormone-sensitive lipase (LIPE) enzymes, respectively. Promotes lipolysis of lipid droplets by mediating phosphorylation of isoform 1 of CHKA (CHKalpha2). Regulates insulin-signaling and glycolysis by phosphorylating IRS1, PFKFB2 and PFKFB3. AMPK stimulates glucose uptake in muscle by increasing the translocation of the glucose transporter SLC2A4/GLUT4 to the plasma membrane, possibly by mediating phosphorylation of TBC1D4/AS160. Regulates transcription and chromatin structure by phosphorylating transcription regulators involved in energy metabolism such as CRTC2/TORC2, FOXO3, histone H2B, HDAC5, MEF2C, MLXIPL/ChREBP, EP300, HNF4A, p53/TP53, SREBF1, SREBF2 and PPARGC1A. Acts as a key regulator of glucose homeostasis in liver by phosphorylating CRTC2/TORC2, leading to CRTC2/TORC2 sequestration in the cytoplasm. In response to stress, phosphorylates 'Ser-36' of histone H2B (H2BS36ph), leading to promote transcription. Acts as a key regulator of cell growth and proliferation by phosphorylating FNIP1, TSC2, RPTOR, WDR24 and ATG1/ULK1: in response to nutrient limitation, negatively regulates the mTORC1 complex by phosphorylating RPTOR component of the mTORC1 complex and by phosphorylating and activating TSC2. Also phosphorylates and inhibits GATOR2 subunit WDR24 in response to nutrient limitation, leading to suppress glucose-mediated mTORC1 activation. In response to energetic stress, phosphorylates FNIP1, inactivating the non-canonical mTORC1 signaling, thereby promoting nuclear translocation of TFEB and TFE3, and inducing transcription of lysosomal or autophagy genes. In response to nutrient limitation, promotes autophagy by phosphorylating and activating ATG1/ULK1. In that process also activates WDR45/WIPI4. Phosphorylates CASP6, thereby preventing its autoprocessing and subsequent activation. In response to nutrient limitation, phosphorylates transcription factor FOXO3 promoting FOXO3 mitochondrial import. Also acts as a regulator of cellular polarity by remodeling the actin cytoskeleton; probably by indirectly activating myosin. AMPK also acts as a regulator of circadian rhythm by mediating phosphorylation of CRY1, leading to destabilize it. May regulate the Wnt signaling pathway by phosphorylating CTNNB1, leading to stabilize it. Also has tau-protein kinase activity: in response to amyloid beta A4 protein (APP) exposure, activated by CAMKK2, leading to phosphorylation of MAPT/TAU; however the relevance of such data remains unclear in vivo. Also phosphorylates CFTR, EEF2K, KLC1, NOS3 and SLC12A1. Regulates hepatic lipogenesis. Activated via SIRT3, represses sterol regulatory element-binding protein (SREBP) transcriptional activities and ATP-consuming lipogenesis to restore cellular energy balance. Upon stress, regulates mitochondrial fragmentation through phosphorylation of MTFR1L. This is 5'-AMP-activated protein kinase catalytic subunit alpha-1 (PRKAA1) from Pongo abelii (Sumatran orangutan).